Consider the following 136-residue polypeptide: Large ribosomal subunit protein uL16c (136 aa).

A compositionally biased stretch (basic residues) spans 1-17; it reads MLSPKRVKFRKQHRGRM. Positions 1–25 are disordered; the sequence is MLSPKRVKFRKQHRGRMKGISTRGN.

It belongs to the universal ribosomal protein uL16 family. In terms of assembly, part of the 50S ribosomal subunit.

It localises to the plastid. The protein localises to the chloroplast. The chain is Large ribosomal subunit protein uL16c from Anthoceros angustus (Hornwort).